The primary structure comprises 113 residues: ATP-dependent Clp protease adapter protein ClpS (113 aa).

Residues 1–11 (MTRPTIPPGPP) are compositionally biased toward pro residues. Disordered stretches follow at residues 1–24 (MTRP…ERTE) and 92–113 (TAHA…SEGE).

It belongs to the ClpS family. Binds to the N-terminal domain of the chaperone ClpA.

Involved in the modulation of the specificity of the ClpAP-mediated ATP-dependent protein degradation. This Deinococcus radiodurans (strain ATCC 13939 / DSM 20539 / JCM 16871 / CCUG 27074 / LMG 4051 / NBRC 15346 / NCIMB 9279 / VKM B-1422 / R1) protein is ATP-dependent Clp protease adapter protein ClpS.